We begin with the raw amino-acid sequence, 696 residues long: D-(-)-3-hydroxybutyrate oligomer hydrolase (696 aa).

The N-terminal stretch at 1-20 (MTRLGWGRRMVFGAALAAVA) is a signal peptide. The active-site Charge relay system is Ser309.

This sequence belongs to the D-(-)-3-hydroxybutyrate oligomer hydrolase family.

The protein localises to the secreted. It catalyses the reaction (3R)-hydroxybutanoate dimer + H2O = 2 (R)-3-hydroxybutanoate + H(+). It participates in lipid metabolism; butanoate metabolism. Its function is as follows. Participates in the degradation of poly-3-hydroxybutyrate (PHB). It works downstream of poly(3-hydroxybutyrate) depolymerase, hydrolyzing D(-)-3-hydroxybutyrate oligomers of various length (3HB-oligomers) into 3HB-monomers. The protein is D-(-)-3-hydroxybutyrate oligomer hydrolase of Burkholderia lata (strain ATCC 17760 / DSM 23089 / LMG 22485 / NCIMB 9086 / R18194 / 383).